The following is a 193-amino-acid chain: RNA pyrophosphohydrolase (193 aa).

Residues 6 to 149 form the Nudix hydrolase domain; the sequence is GFRPNVGIIL…KRDVYQRALQ (144 aa). The Nudix box motif lies at 38–59; that stretch reads GGIKFGETPEQAMFRELEEEVG. Positions 174–193 are disordered; it reads THSARKTDEPSTEQTKPNNE.

Belongs to the Nudix hydrolase family. RppH subfamily. It depends on a divalent metal cation as a cofactor.

Its function is as follows. Accelerates the degradation of transcripts by removing pyrophosphate from the 5'-end of triphosphorylated RNA, leading to a more labile monophosphorylated state that can stimulate subsequent ribonuclease cleavage. The polypeptide is RNA pyrophosphohydrolase (Herminiimonas arsenicoxydans).